The sequence spans 694 residues: Acetyl-coenzyme A synthetase (694 aa).

The disordered stretch occupies residues 1–23; it reads MSDKRPRSPCSNNNDELNDSSVL. Polar residues predominate over residues 9-23; sequence PCSNNNDELNDSSVL. CoA-binding positions include 229-232 and Thr347; that span reads RGKK. ATP-binding positions include 423 to 425, 447 to 452, Asp536, and Arg551; these read GEP and DTYWQT. Residue Ser559 coordinates CoA. Arg562 lines the ATP pocket. A CoA-binding site is contributed by Arg628.

Belongs to the ATP-dependent AMP-binding enzyme family.

It carries out the reaction acetate + ATP + CoA = acetyl-CoA + AMP + diphosphate. This chain is Acetyl-coenzyme A synthetase (ACS), found in Cryptosporidium parvum.